We begin with the raw amino-acid sequence, 486 residues long: Cardiolipin synthase A (486 aa).

The next 2 helical transmembrane spans lie at 3–23 (TFYT…IAGV) and 38–58 (MAWL…YLSF). 2 PLD phosphodiesterase domains span residues 219 to 246 (MDLR…VDPR) and 399 to 426 (EGGL…DMRS). Active-site residues include histidine 224, lysine 226, aspartate 231, histidine 404, lysine 406, and aspartate 411.

The protein belongs to the phospholipase D family. Cardiolipin synthase subfamily. ClsA sub-subfamily.

It localises to the cell inner membrane. It carries out the reaction 2 a 1,2-diacyl-sn-glycero-3-phospho-(1'-sn-glycerol) = a cardiolipin + glycerol. Catalyzes the reversible phosphatidyl group transfer from one phosphatidylglycerol molecule to another to form cardiolipin (CL) (diphosphatidylglycerol) and glycerol. The polypeptide is Cardiolipin synthase A (Yersinia pseudotuberculosis serotype O:3 (strain YPIII)).